The following is a 59-amino-acid chain: Aedesin (59 aa).

The first 23 residues, 1–23, serve as a signal peptide directing secretion; the sequence is MNFTKLFAIVLLAALVLLGQTEA.

Belongs to the cecropin family. As to expression, salivary gland (at protein level).

It localises to the secreted. Its function is as follows. Antimicrobial peptide. Exhibits antibacterial activity against Gram-negative bacteria, such as Escherichia coli, Pseudomonas aeruginosa, Acinetobacter baumannii and Klebsiella pneumoniae. Shows no antibacterial effects against Gram-positive bacteria, such as Staphylococcus aureus, Enterococcus faecalis and Enterococcus faecium. Exhibits antiviral activity against all four dengue virus serotypes and chikungunya virus. Exhibits leishmanicidal activity. Partially neutralizes lipopolysaccharides (LPS). Exhibits anti-inflammatory properties: inhibits LPS-induced iNOS/NOS2 transcription, nitric oxide (NO) and pro-inflammatory cytokine production in mouse macrophages and human peripheral blood mononuclear cells (PBMCs); inhibits LPS-induced activation of MAPK and NF-kappa-B signaling pathways in mouse macrophages. The polypeptide is Aedesin (Aedes aegypti (Yellowfever mosquito)).